The following is a 98-amino-acid chain: Large ribosomal subunit protein uL23 (98 aa).

Belongs to the universal ribosomal protein uL23 family. Part of the 50S ribosomal subunit. Contacts protein L29, and trigger factor when it is bound to the ribosome.

In terms of biological role, one of the early assembly proteins it binds 23S rRNA. One of the proteins that surrounds the polypeptide exit tunnel on the outside of the ribosome. Forms the main docking site for trigger factor binding to the ribosome. This chain is Large ribosomal subunit protein uL23, found in Marinomonas sp. (strain MWYL1).